The primary structure comprises 251 residues: HTH-type transcriptional regulator UlaR (251 aa).

Residues 3 to 58 (EAQRHQILLEMLAQLGFVTVEKVVERLGISPATARRDINKLDESGKLKKVRNGAEA) form the HTH deoR-type domain. The H-T-H motif DNA-binding region spans 20-39 (VTVEKVVERLGISPATARRD).

The protein localises to the cytoplasm. Functionally, represses ulaG and the ulaABCDEF operon. The polypeptide is HTH-type transcriptional regulator UlaR (Escherichia coli O139:H28 (strain E24377A / ETEC)).